The following is a 994-amino-acid chain: Regulator of telomere elongation helicase 1 homolog (994 aa).

Residues 7–316 (AGIPVHFPFE…DDLMLLKEML (310 aa)) form the Helicase ATP-binding domain. Residue 42–49 (SPTGTGKT) participates in ATP binding. C146, C164, C173, and C209 together coordinate [4Fe-4S] cluster. The DEAH box signature appears at 252-255 (DEAH). Residues 861–887 (SSGLVKIHKRERSSPPGSSQSSSQTAK) form a disordered region. Over residues 874 to 884 (SPPGSSQSSSQ) the composition is skewed to low complexity.

Belongs to the helicase family. RAD3/XPD subfamily.

Its subcellular location is the nucleus. The enzyme catalyses ATP + H2O = ADP + phosphate + H(+). Its function is as follows. A probable ATP-dependent DNA helicase implicated in DNA repair and the maintenance of genomic stability. Acts as an anti-recombinase to counteract toxic recombination and limit crossover during meiosis. Regulates meiotic recombination and crossover homeostasis by physically dissociating strand invasion events and thereby promotes noncrossover repair by meiotic synthesis dependent strand annealing (SDSA) as well as disassembly of D loop recombination intermediates. This is Regulator of telomere elongation helicase 1 homolog from Drosophila ananassae (Fruit fly).